Consider the following 340-residue polypeptide: Alpha-1,4-N-acetylglucosaminyltransferase (340 aa).

At 1–4 (MRKE) the chain is on the cytoplasmic side. Residues 5-25 (LQLSLSVTLLLVCGFLYQFTL) form a helical; Signal-anchor for type II membrane protein membrane-spanning segment. The Lumenal segment spans residues 26-340 (KSSCLFCLPS…VTGELGPGNK (315 aa)). Residues Asn-99 and Asn-138 are each glycosylated (N-linked (GlcNAc...) asparagine). Residues 167–169 (DTD) carry the DXD motif motif. Residues Asn-251 and Asn-282 are each glycosylated (N-linked (GlcNAc...) asparagine).

The protein belongs to the glycosyltransferase 32 family. Detected in stomach and pancreas.

It localises to the golgi apparatus membrane. Its pathway is protein modification; protein glycosylation. Its function is as follows. Catalyzes the transfer of N-acetylglucosamine (GlcNAc) to core 2 branched O-glycans. Necessary for the synthesis of type III mucin which is specifically produced in the stomach, duodenum, and pancreatic duct. May protect against inflammation-associated gastric adenocarcinomas. The chain is Alpha-1,4-N-acetylglucosaminyltransferase (A4GNT) from Homo sapiens (Human).